A 471-amino-acid chain; its full sequence is Ubiquitin-conjugating enzyme E2 variant 3 (471 aa).

Residues 2–145 (EFDCEGLRRL…QEELPMYSLS (144 aa)) form the UEV domain. 191–219 (GELGIACTLAISAKGIADRLVLLDLSEGT) serves as a coordination point for NAD(+).

In the N-terminal section; belongs to the ubiquitin-conjugating enzyme family. UEV subfamily. It in the C-terminal section; belongs to the LDH/MDH superfamily. In terms of assembly, homodimer. In terms of tissue distribution, colon, colon carcinoma cell lines, normal cervical epithelium, carcinomas of the uterine cervix and peripheral blood leukocytes.

Possible negative regulator of polyubiquitination. The protein is Ubiquitin-conjugating enzyme E2 variant 3 of Homo sapiens (Human).